We begin with the raw amino-acid sequence, 979 residues long: Chromosome partition protein Smc (979 aa).

33-40 provides a ligand contact to ATP; the sequence is PNGSGKSN. Residues 169 to 400 are a coiled coil; sequence SKYKLDKEEA…INILKQQFEN (232 aa). In terms of domain architecture, SMC hinge spans 419–538; it reads DGYIGLASEL…DNVDNANRIA (120 aa). Coiled-coil stretches lie at residues 572-716 and 750-818; these read ILNY…HSDS and SLDL…DKII.

Belongs to the SMC family. Homodimer.

The protein resides in the cytoplasm. In terms of biological role, required for chromosome condensation and partitioning. The polypeptide is Chromosome partition protein Smc (Mesomycoplasma hyorhinis (Mycoplasma hyorhinis)).